Reading from the N-terminus, the 243-residue chain is 1-(5-phosphoribosyl)-5-[(5-phosphoribosylamino)methylideneamino] imidazole-4-carboxamide isomerase (243 aa).

The Proton acceptor role is filled by aspartate 8. Aspartate 129 functions as the Proton donor in the catalytic mechanism.

It belongs to the HisA/HisF family.

Its subcellular location is the cytoplasm. It carries out the reaction 1-(5-phospho-beta-D-ribosyl)-5-[(5-phospho-beta-D-ribosylamino)methylideneamino]imidazole-4-carboxamide = 5-[(5-phospho-1-deoxy-D-ribulos-1-ylimino)methylamino]-1-(5-phospho-beta-D-ribosyl)imidazole-4-carboxamide. It functions in the pathway amino-acid biosynthesis; L-histidine biosynthesis; L-histidine from 5-phospho-alpha-D-ribose 1-diphosphate: step 4/9. This chain is 1-(5-phosphoribosyl)-5-[(5-phosphoribosylamino)methylideneamino] imidazole-4-carboxamide isomerase, found in Syntrophotalea carbinolica (strain DSM 2380 / NBRC 103641 / GraBd1) (Pelobacter carbinolicus).